Here is a 445-residue protein sequence, read N- to C-terminus: Probable aminotransferase TAT3 (445 aa).

It belongs to the class-I pyridoxal-phosphate-dependent aminotransferase family. Pyridoxal 5'-phosphate serves as cofactor. Expressed in roots, leaves and cauline leaves.

This is Probable aminotransferase TAT3 (TAT3) from Arabidopsis thaliana (Mouse-ear cress).